We begin with the raw amino-acid sequence, 305 residues long: Protoheme IX farnesyltransferase (305 aa).

The next 9 helical transmembrane spans lie at 28–48 (IIEL…QGVP), 52–72 (LVLL…ALNM), 101–121 (LAFG…TVNW), 122–142 (LSAW…TMIL), 149–169 (NIVW…SSVT), 174–194 (WAPV…YWPL), 218–238 (VVAR…LLLT), 240–260 (LGYT…FWLW), and 283–303 (LFHW…VDPF).

It belongs to the UbiA prenyltransferase family. Protoheme IX farnesyltransferase subfamily.

It localises to the cell membrane. It carries out the reaction heme b + (2E,6E)-farnesyl diphosphate + H2O = Fe(II)-heme o + diphosphate. It functions in the pathway porphyrin-containing compound metabolism; heme O biosynthesis; heme O from protoheme: step 1/1. In terms of biological role, converts heme B (protoheme IX) to heme O by substitution of the vinyl group on carbon 2 of heme B porphyrin ring with a hydroxyethyl farnesyl side group. This chain is Protoheme IX farnesyltransferase, found in Streptomyces avermitilis (strain ATCC 31267 / DSM 46492 / JCM 5070 / NBRC 14893 / NCIMB 12804 / NRRL 8165 / MA-4680).